The primary structure comprises 313 residues: Methionyl-tRNA formyltransferase (313 aa).

Residue 110–113 participates in (6S)-5,6,7,8-tetrahydrofolate binding; it reads SLLP.

This sequence belongs to the Fmt family.

It catalyses the reaction L-methionyl-tRNA(fMet) + (6R)-10-formyltetrahydrofolate = N-formyl-L-methionyl-tRNA(fMet) + (6S)-5,6,7,8-tetrahydrofolate + H(+). Its function is as follows. Attaches a formyl group to the free amino group of methionyl-tRNA(fMet). The formyl group appears to play a dual role in the initiator identity of N-formylmethionyl-tRNA by promoting its recognition by IF2 and preventing the misappropriation of this tRNA by the elongation apparatus. The protein is Methionyl-tRNA formyltransferase of Lysinibacillus sphaericus (strain C3-41).